A 391-amino-acid chain; its full sequence is MAEESSCTRDCMSFSVLNWDQVSRLHEVLTEVVPIHGRGNFPTLEITLKDIVQTVRSRLEEAGIKVHDVRLNGSAAGHVLVKDNGLGCKDLDLIFHVALPTEAEFQLVRDVVLCSLLNFLPEGVNKLKISPVTLKEAYVQKLVKVCTDTDRWSLISLSNKNGKNVELKFVDSIRRQFEFSVDSFQIILDSLLFFYDCSNNPISEHFHPTVIGESMYGDFEEAFDHLQNRLIATKNPEEIRGGGLLKYSNLLVRDFRPTDQEEIKTLERYMCSRFFIDFPDILEQQRKLETYLQNHFAEEERSKYDYLMILRRVVNESTVCLMGHERRQTLNLISLLALRVLAEQNIIPSATNVTCYYQPAPYVSDGNFSNYYVAHPPVTYSQPYPTWLPCN.

This sequence belongs to the TENT family. In terms of assembly, interacts with BCCIP and PABPC1; the interaction has no effect on TENT5C poly(A) polymerase function. Interacts with PLK4; this interaction leads to the TENT5C recruitment into the centrosome.

The protein resides in the nucleus. It is found in the cytoplasm. It localises to the cytoskeleton. Its subcellular location is the microtubule organizing center. The protein localises to the centrosome. It carries out the reaction RNA(n) + ATP = RNA(n)-3'-adenine ribonucleotide + diphosphate. Catalyzes the transfer of one adenosine molecule from an ATP to an mRNA poly(A) tail bearing a 3'-OH terminal group and enhances mRNA stability and gene expression. Can also elongate RNA oligos ending with uridine molecule, provided that the sequence is adenosine-rich. Mainly targets mRNAs encoding endoplasmic reticulum-targeted protein. In terms of biological role, (Microbial infection) Seems to enhance replication of some viruses, including yellow fever virus, in response to type I interferon. This is Terminal nucleotidyltransferase 5C from Homo sapiens (Human).